We begin with the raw amino-acid sequence, 405 residues long: L-rhamnonate dehydratase (405 aa).

Residues H33 and R59 each contribute to the substrate site. Residues D226, E252, and E280 each contribute to the Mg(2+) site. H329 acts as the Proton acceptor in catalysis. Residue E349 participates in substrate binding.

It belongs to the mandelate racemase/muconate lactonizing enzyme family. RhamD subfamily. As to quaternary structure, homooctamer; tetramer of dimers. Mg(2+) is required as a cofactor.

The enzyme catalyses L-rhamnonate = 2-dehydro-3-deoxy-L-rhamnonate + H2O. In terms of biological role, catalyzes the dehydration of L-rhamnonate to 2-keto-3-deoxy-L-rhamnonate (KDR). Can also dehydrate L-lyxonate and L-mannonate, although less efficiently, but not 2-keto-4-hydroxyheptane-1,7-dioate. The polypeptide is L-rhamnonate dehydratase (rhmD) (Salmonella typhimurium (strain LT2 / SGSC1412 / ATCC 700720)).